Consider the following 224-residue polypeptide: uncharacterized protein (224 aa).

One can recognise a 4Fe-4S domain in the interval 9–68 (SKMVDVNEITKYLPGFNCGACGYKRCDLFAEALLNKDVKLEDCPFLLRERFKENYEKLKE). [4Fe-4S] cluster-binding residues include Cys-26, Cys-29, Cys-34, and Cys-51.

The cofactor is [4Fe-4S] cluster.

This is an uncharacterized protein from Methanocaldococcus jannaschii (strain ATCC 43067 / DSM 2661 / JAL-1 / JCM 10045 / NBRC 100440) (Methanococcus jannaschii).